A 328-amino-acid polypeptide reads, in one-letter code: Ubiquitin carboxyl-terminal hydrolase isozyme L5 (328 aa).

The region spanning 7–225 (EWCLMESDPG…IRFNLMAIVS (219 aa)) is the UCH catalytic domain. N6-succinyllysine is present on Lys47. The active-site Nucleophile is Cys88. Position 158 is an N6-acetyllysine (Lys158). Catalysis depends on His164, which acts as the Proton donor. Lys288 carries the N6-succinyllysine modification. One can recognise a ULD domain in the interval 290–318 (NYLPFIMELLKTLAEHQQLIPLVEKAKEK). The interval 312–328 (VEKAKEKQNAKKAQETK) is interaction with ADRM1.

This sequence belongs to the peptidase C12 family. Component of the 19S (PA700) regulatory complex of the 26S proteasome. Interacts with ADRM1 and NFRKB. Component of the INO80 complex; specifically part of a complex module associated with N-terminus of INO80.

Its subcellular location is the cytoplasm. The protein localises to the nucleus. It carries out the reaction Thiol-dependent hydrolysis of ester, thioester, amide, peptide and isopeptide bonds formed by the C-terminal Gly of ubiquitin (a 76-residue protein attached to proteins as an intracellular targeting signal).. With respect to regulation, activated by ADRM1. Inhibited by interaction with NFRKB. In terms of biological role, protease that specifically cleaves 'Lys-48'-linked polyubiquitin chains. Deubiquitinating enzyme associated with the 19S regulatory subunit of the 26S proteasome. Putative regulatory component of the INO80 complex; however is inactive in the INO80 complex and is activated by a transient interaction of the INO80 complex with the proteasome via ADRM1. This chain is Ubiquitin carboxyl-terminal hydrolase isozyme L5 (UCHL5), found in Bos taurus (Bovine).